The primary structure comprises 600 residues: ATP-dependent ubiquitin transferase-like protein Cap2 (600 aa).

The E2-like domain stretch occupies residues 1–158 (MSTVVQQVPA…QEKLATTGDA (158 aa)). Cys109 functions as the For E2-like domain in the catalytic mechanism. The tract at residues 159 to 373 (VELPAFPDQS…DQLRTRGEAA (215 aa)) is linker domain. The tract at residues 375 to 600 (DIRSKKVLII…GTVEKEPHEY (226 aa)) is adenylation plus E1-like domain. Cys548 functions as the For E1-like domain in the catalytic mechanism.

In the C-terminal section; belongs to the HesA/MoeB/ThiF family. Crystallizes as a Cap2 homodimer bound on each side by a CdnD monomer.

CD-NTase priming component of a CBASS antiviral system. CBASS (cyclic oligonucleotide-based antiphage signaling system) provides immunity against bacteriophages. The CD-NTase protein (CdnD) synthesizes cyclic nucleotides in response to infection; these serve as specific second messenger signals. The signals activate a diverse range of effectors, leading to bacterial cell death and thus abortive phage infection. A type II-C(AAG) CBASS system. In terms of biological role, primes CdnD; acts as a protein transferase, conjugating CdnD, the CD-NTase, to unidentified target(s) in the cell via an E1-E2 ubiquitin transferase-like mechanism. Upon phage infection CdnD activates and makes cyclic nucleotides. During the conjugation reaction CdnD is transiently attached to AMP. Protein conjugation requires ATP. Functionally, protects E.coli against phage T2 infection. When the cdnD-cap2-cap3-cap4 operon is introduced in E.coli there is a more than 10(3) decrease in the efficiency of T2 plaque formation. The operon does not protect against phage T5 and only about 10-fold against T7. In Enterobacter hormaechei subsp. hoffmannii (strain UCI 50), this protein is ATP-dependent ubiquitin transferase-like protein Cap2.